The sequence spans 245 residues: Phosphoadenosine 5'-phosphosulfate reductase (245 aa).

Residue Cys-239 is the Nucleophile; cysteine thiosulfonate intermediate of the active site.

It belongs to the PAPS reductase family. CysH subfamily.

Its subcellular location is the cytoplasm. The catalysed reaction is [thioredoxin]-disulfide + sulfite + adenosine 3',5'-bisphosphate + 2 H(+) = [thioredoxin]-dithiol + 3'-phosphoadenylyl sulfate. It functions in the pathway sulfur metabolism; hydrogen sulfide biosynthesis; sulfite from sulfate: step 3/3. Its function is as follows. Catalyzes the formation of sulfite from phosphoadenosine 5'-phosphosulfate (PAPS) using thioredoxin as an electron donor. The sequence is that of Phosphoadenosine 5'-phosphosulfate reductase from Baumannia cicadellinicola subsp. Homalodisca coagulata.